Reading from the N-terminus, the 261-residue chain is Glucose 1-dehydrogenase 1 (261 aa).

Position 11–35 (11–35 (VITGSSTGLGKAMAIRFATEKAKVV)) interacts with NADP(+). Ser-145 is a substrate binding site. The Proton acceptor role is filled by Tyr-158.

It belongs to the short-chain dehydrogenases/reductases (SDR) family. In terms of assembly, homotetramer.

It carries out the reaction D-glucose + NAD(+) = D-glucono-1,5-lactone + NADH + H(+). The enzyme catalyses D-glucose + NADP(+) = D-glucono-1,5-lactone + NADPH + H(+). Functionally, may play some role in spore germination. This chain is Glucose 1-dehydrogenase 1 (gdhI), found in Priestia megaterium (Bacillus megaterium).